The chain runs to 206 residues: Phosphoheptose isomerase (206 aa).

The 159-residue stretch at 37–195 (LVDAFKAGKK…IEQKMDINNE (159 aa)) folds into the SIS domain. Substrate is bound at residue 52-54 (NGG). Zn(2+) is bound by residues histidine 61 and glutamate 65. Substrate-binding positions include glutamate 65, 93 to 94 (ND), 119 to 121 (STS), serine 124, and glutamine 172. Zn(2+)-binding residues include glutamine 172 and histidine 180.

This sequence belongs to the SIS family. GmhA subfamily. As to quaternary structure, homotetramer. The cofactor is Zn(2+).

It localises to the cytoplasm. It carries out the reaction 2 D-sedoheptulose 7-phosphate = D-glycero-alpha-D-manno-heptose 7-phosphate + D-glycero-beta-D-manno-heptose 7-phosphate. Its pathway is carbohydrate biosynthesis; D-glycero-D-manno-heptose 7-phosphate biosynthesis; D-glycero-alpha-D-manno-heptose 7-phosphate and D-glycero-beta-D-manno-heptose 7-phosphate from sedoheptulose 7-phosphate: step 1/1. Its function is as follows. Catalyzes the isomerization of sedoheptulose 7-phosphate in D-glycero-D-manno-heptose 7-phosphate. The sequence is that of Phosphoheptose isomerase from Hamiltonella defensa subsp. Acyrthosiphon pisum (strain 5AT).